Reading from the N-terminus, the 373-residue chain is Thyroid hormone receptor beta-A (373 aa).

Residues 1–18 are modulating; sequence MPSSMSGYIPSYLDKDEL. NR C4-type zinc fingers lie at residues 19 to 39 and 57 to 81; these read CVVCGDKATGYHYRCITCEGC and CKYEGKCVIDKVTRNQCQECRFKKC. Positions 19 to 93 form a DNA-binding region, nuclear receptor; the sequence is CVVCGDKATG…VGMATDLVLD (75 aa). One can recognise an NR LBD domain in the interval 129–373; it reads EEWELIQVVT…PPLFLEVFED (245 aa).

This sequence belongs to the nuclear hormone receptor family. NR1 subfamily.

It is found in the nucleus. Its function is as follows. High affinity receptor for triiodothyronine (T3). The polypeptide is Thyroid hormone receptor beta-A (thrb-a) (Xenopus laevis (African clawed frog)).